The following is a 154-amino-acid chain: Xanthine-guanine phosphoribosyltransferase (154 aa).

Residues 37-38 (RG) and 90-98 (DDLVDTGNT) each bind 5-phospho-alpha-D-ribose 1-diphosphate. Mg(2+) is bound at residue aspartate 91. Guanine contacts are provided by aspartate 94 and isoleucine 137. Residues aspartate 94 and isoleucine 137 each contribute to the xanthine site. GMP contacts are provided by residues 94–98 (DTGNT) and 136–137 (WI).

The protein belongs to the purine/pyrimidine phosphoribosyltransferase family. XGPT subfamily. In terms of assembly, homotetramer. The cofactor is Mg(2+).

The protein resides in the cell inner membrane. It catalyses the reaction GMP + diphosphate = guanine + 5-phospho-alpha-D-ribose 1-diphosphate. The catalysed reaction is XMP + diphosphate = xanthine + 5-phospho-alpha-D-ribose 1-diphosphate. The enzyme catalyses IMP + diphosphate = hypoxanthine + 5-phospho-alpha-D-ribose 1-diphosphate. It functions in the pathway purine metabolism; GMP biosynthesis via salvage pathway; GMP from guanine: step 1/1. Its pathway is purine metabolism; XMP biosynthesis via salvage pathway; XMP from xanthine: step 1/1. Functionally, purine salvage pathway enzyme that catalyzes the transfer of the ribosyl-5-phosphate group from 5-phospho-alpha-D-ribose 1-diphosphate (PRPP) to the N9 position of the 6-oxopurines guanine and xanthine to form the corresponding ribonucleotides GMP (guanosine 5'-monophosphate) and XMP (xanthosine 5'-monophosphate), with the release of PPi. To a lesser extent, also acts on hypoxanthine. This is Xanthine-guanine phosphoribosyltransferase from Histophilus somni (strain 129Pt) (Haemophilus somnus).